A 309-amino-acid polypeptide reads, in one-letter code: Taste receptor type 2 member 8 (309 aa).

The Extracellular segment spans residues 1 to 7; sequence MFSPADN. A helical transmembrane segment spans residues 8 to 28; it reads IFIILITGEFIIGILGNGYIG. Residues 29–50 are Cytoplasmic-facing; sequence LVNWIDWIKKKKISTIDCILTN. A helical transmembrane segment spans residues 51-71; the sequence is LVISRICLISVMVVNGIVIVL. Topologically, residues 72–82 are extracellular; that stretch reads YPDVYTKTKLQ. A helical transmembrane segment spans residues 83–103; sequence IVICTFWTFANYLNMWFTACL. At 104 to 131 the chain is on the cytoplasmic side; that stretch reads NVFYSLKVANSSHPLFLWLKRKIDMVVR. Residues 132-152 traverse the membrane as a helical segment; that stretch reads WILLGCFAISLLVSLIIATVL. At 153 to 184 the chain is on the extracellular side; that stretch reads SHDYRFHAIAKHKRNVTEMFHVSKMPYFEPLT. N-linked (GlcNAc...) asparagine glycosylation occurs at asparagine 167. A helical membrane pass occupies residues 185-205; it reads LFNLLAIVPFIVSLMSFFLLV. The Cytoplasmic portion of the chain corresponds to 206-239; sequence RSLWRHTKQIKLYATGGRDPSTEAHVRAIKTMTL. The chain crosses the membrane as a helical span at residues 240–260; it reads LIFFFFLYYITSLLVXFSYLI. The Extracellular portion of the chain corresponds to 261 to 266; that stretch reads TNYKLA. Residues 267 to 287 form a helical membrane-spanning segment; sequence MAFGEIVAILYPSGHSLILII. Over 288–309 the chain is Cytoplasmic; it reads LNNKLRQASVRMLTCRKIACVT.

Belongs to the G-protein coupled receptor T2R family.

It localises to the membrane. Receptor that may play a role in the perception of bitterness and is gustducin-linked. May play a role in sensing the chemical composition of the gastrointestinal content. The activity of this receptor may stimulate alpha gustducin, mediate PLC-beta-2 activation and lead to the gating of TRPM5. The chain is Taste receptor type 2 member 8 (TAS2R8) from Papio hamadryas (Hamadryas baboon).